The following is a 303-amino-acid chain: Ribosomal RNA small subunit methyltransferase H (303 aa).

S-adenosyl-L-methionine contacts are provided by residues 36–38, Asp-55, Phe-81, Asp-101, and Gln-108; that span reads CGH.

The protein belongs to the methyltransferase superfamily. RsmH family.

It localises to the cytoplasm. The enzyme catalyses cytidine(1402) in 16S rRNA + S-adenosyl-L-methionine = N(4)-methylcytidine(1402) in 16S rRNA + S-adenosyl-L-homocysteine + H(+). Specifically methylates the N4 position of cytidine in position 1402 (C1402) of 16S rRNA. The polypeptide is Ribosomal RNA small subunit methyltransferase H (Aster yellows witches'-broom phytoplasma (strain AYWB)).